Here is a 337-residue protein sequence, read N- to C-terminus: Glucokinase (337 aa).

11 to 16 contacts ATP; it reads ADIGGT.

The protein belongs to the bacterial glucokinase family.

It localises to the cytoplasm. The enzyme catalyses D-glucose + ATP = D-glucose 6-phosphate + ADP + H(+). This is Glucokinase from Xylella fastidiosa (strain M23).